A 273-amino-acid chain; its full sequence is Large ribosomal subunit protein uL2 (273 aa).

Residues 221 to 263 (RGTAMNPVDHPHGGGEGRNFGKHPVSPWGLQTKGKKTRKNKRT) are disordered. A compositionally biased stretch (basic residues) spans 253–263 (KGKKTRKNKRT).

The protein belongs to the universal ribosomal protein uL2 family. In terms of assembly, part of the 50S ribosomal subunit. Forms a bridge to the 30S subunit in the 70S ribosome.

In terms of biological role, one of the primary rRNA binding proteins. Required for association of the 30S and 50S subunits to form the 70S ribosome, for tRNA binding and peptide bond formation. It has been suggested to have peptidyltransferase activity; this is somewhat controversial. Makes several contacts with the 16S rRNA in the 70S ribosome. The polypeptide is Large ribosomal subunit protein uL2 (Buchnera aphidicola subsp. Baizongia pistaciae (strain Bp)).